The sequence spans 452 residues: GTPase Der (452 aa).

2 EngA-type G domains span residues 4 to 169 and 177 to 352; these read PIVA…PTTE and IKVA…ASHR. Residues 10–17, 57–61, 120–123, 183–190, 230–234, and 295–298 contribute to the GTP site; these read GRPNVGKS, DTGGL, NKCE, DTAGI, and NKWD. In terms of domain architecture, KH-like spans 353 to 438; it reads RRVSTAVINE…PIRLIWRGKS (86 aa).

Belongs to the TRAFAC class TrmE-Era-EngA-EngB-Septin-like GTPase superfamily. EngA (Der) GTPase family. As to quaternary structure, associates with the 50S ribosomal subunit.

In terms of biological role, GTPase that plays an essential role in the late steps of ribosome biogenesis. The sequence is that of GTPase Der from Gloeothece citriformis (strain PCC 7424) (Cyanothece sp. (strain PCC 7424)).